The chain runs to 313 residues: Ribosomal RNA small subunit methyltransferase H (313 aa).

Residues glycine 35–histidine 37, aspartate 55, phenylalanine 80, aspartate 102, and glutamine 109 each bind S-adenosyl-L-methionine.

The protein belongs to the methyltransferase superfamily. RsmH family.

The protein resides in the cytoplasm. The catalysed reaction is cytidine(1402) in 16S rRNA + S-adenosyl-L-methionine = N(4)-methylcytidine(1402) in 16S rRNA + S-adenosyl-L-homocysteine + H(+). In terms of biological role, specifically methylates the N4 position of cytidine in position 1402 (C1402) of 16S rRNA. This chain is Ribosomal RNA small subunit methyltransferase H, found in Shewanella woodyi (strain ATCC 51908 / MS32).